The sequence spans 122 residues: Large ribosomal subunit protein uL18 (122 aa).

The protein belongs to the universal ribosomal protein uL18 family. As to quaternary structure, part of the 50S ribosomal subunit; part of the 5S rRNA/L5/L18/L25 subcomplex. Contacts the 5S and 23S rRNAs.

Its function is as follows. This is one of the proteins that bind and probably mediate the attachment of the 5S RNA into the large ribosomal subunit, where it forms part of the central protuberance. This is Large ribosomal subunit protein uL18 from Buchnera aphidicola subsp. Acyrthosiphon pisum (strain 5A).